Here is a 165-residue protein sequence, read N- to C-terminus: 3-hydroxyacyl-[acyl-carrier-protein] dehydratase FabZ (165 aa).

Residue His-68 is part of the active site.

This sequence belongs to the thioester dehydratase family. FabZ subfamily.

It localises to the cytoplasm. It carries out the reaction a (3R)-hydroxyacyl-[ACP] = a (2E)-enoyl-[ACP] + H2O. Involved in unsaturated fatty acids biosynthesis. Catalyzes the dehydration of short chain beta-hydroxyacyl-ACPs and long chain saturated and unsaturated beta-hydroxyacyl-ACPs. This Methylobacterium sp. (strain 4-46) protein is 3-hydroxyacyl-[acyl-carrier-protein] dehydratase FabZ.